The following is a 357-amino-acid chain: Dihydroorotate dehydrogenase (quinone) (357 aa).

FMN-binding positions include 66–70 (AGFDK) and Thr-90. Lys-70 contacts substrate. Residue 115–119 (NRMGF) participates in substrate binding. 2 residues coordinate FMN: Asn-143 and Asn-176. Substrate is bound at residue Asn-176. Catalysis depends on Ser-179, which acts as the Nucleophile. Residue Asn-181 participates in substrate binding. FMN is bound by residues Lys-212 and Thr-240. 241–242 (NT) serves as a coordination point for substrate. FMN contacts are provided by residues Gly-264, Gly-293, and 314–315 (YT).

This sequence belongs to the dihydroorotate dehydrogenase family. Type 2 subfamily. In terms of assembly, monomer. Requires FMN as cofactor.

It localises to the cell membrane. It catalyses the reaction (S)-dihydroorotate + a quinone = orotate + a quinol. It participates in pyrimidine metabolism; UMP biosynthesis via de novo pathway; orotate from (S)-dihydroorotate (quinone route): step 1/1. Functionally, catalyzes the conversion of dihydroorotate to orotate with quinone as electron acceptor. This chain is Dihydroorotate dehydrogenase (quinone), found in Mycobacterium bovis (strain BCG / Pasteur 1173P2).